The sequence spans 96 residues: Co-chaperonin GroES (96 aa).

This sequence belongs to the GroES chaperonin family. As to quaternary structure, heptamer of 7 subunits arranged in a ring. Interacts with the chaperonin GroEL.

The protein resides in the cytoplasm. Functionally, together with the chaperonin GroEL, plays an essential role in assisting protein folding. The GroEL-GroES system forms a nano-cage that allows encapsulation of the non-native substrate proteins and provides a physical environment optimized to promote and accelerate protein folding. GroES binds to the apical surface of the GroEL ring, thereby capping the opening of the GroEL channel. The polypeptide is Co-chaperonin GroES (Herminiimonas arsenicoxydans).